The following is a 244-amino-acid chain: UL16-binding protein 1 (244 aa).

Positions M1–A25 are cleaved as a signal peptide. The segment at G26–E117 is MHC class I alpha-1 like. An intrachain disulfide couples C50 to C66. N-linked (GlcNAc...) asparagine glycosylation occurs at N82. The tract at residues P118 to T208 is MHC class I alpha-2 like. C127 and C190 are oxidised to a cystine. G216 carries the GPI-anchor amidated glycine lipid modification. The propeptide at T217–R244 is removed in mature form.

This sequence belongs to the MHC class I family. As to quaternary structure, interacts with KLRK1/NKG2D. Does not bind to beta2-microglobulin. In terms of assembly, (Microbial infection) In CMV-infected cells, interacts with the viral glycoprotein UL16; this interaction causes ULBP1 retention in the endoplasmic reticulum and cis-Golgi and prevents binding to and activation of KLRK1/NKG2D, providing CMV with an immune evasion mechanism. Expressed in T-cells, B-cells, erythroleukemia cell lines and in a wide range of tissues including heart, brain, lung, liver, testis, lymph node, thymus, tonsil and bone marrow. Also found in fetal heart, brain, lung and liver.

It is found in the cell membrane. The protein localises to the endoplasmic reticulum. Functionally, binds and activates the KLRK1/NKG2D receptor, mediating natural killer cell cytotoxicity. This is UL16-binding protein 1 (ULBP1) from Homo sapiens (Human).